The chain runs to 1341 residues: DNA-directed RNA polymerase subunit Rpo1N (1341 aa).

Positions 62, 65, 72, 75, 102, 105, 149, and 152 each coordinate Zn(2+). Asp918, Asp920, and Asp922 together coordinate Mg(2+).

It belongs to the RNA polymerase beta' chain family. Part of the RNA polymerase complex. It depends on Mg(2+) as a cofactor. Zn(2+) is required as a cofactor. In terms of processing, this protein undergoes a protein self splicing that involves a post-translational excision of the intervening region (intein) followed by peptide ligation.

The protein localises to the cytoplasm. The enzyme catalyses RNA(n) + a ribonucleoside 5'-triphosphate = RNA(n+1) + diphosphate. Its function is as follows. DNA-dependent RNA polymerase (RNAP) catalyzes the transcription of DNA into RNA using the four ribonucleoside triphosphates as substrates. Forms the clamp head domain. This is DNA-directed RNA polymerase subunit Rpo1N from Methanocaldococcus jannaschii (strain ATCC 43067 / DSM 2661 / JAL-1 / JCM 10045 / NBRC 100440) (Methanococcus jannaschii).